The following is a 326-amino-acid chain: Transposase for insertion sequence element IS4351 (326 aa).

The Integrase catalytic domain occupies 156 to 317; it reads IDERPEIVEL…TPNEKFKQII (162 aa).

This sequence belongs to the transposase IS30 family.

Required for the transposition of the insertion element. The sequence is that of Transposase for insertion sequence element IS4351 from Bacteroides fragilis.